Here is a 91-residue protein sequence, read N- to C-terminus: Small ribosomal subunit protein uS19 (91 aa).

The protein belongs to the universal ribosomal protein uS19 family.

In terms of biological role, protein S19 forms a complex with S13 that binds strongly to the 16S ribosomal RNA. The sequence is that of Small ribosomal subunit protein uS19 from Methylacidiphilum infernorum (isolate V4) (Methylokorus infernorum (strain V4)).